Here is a 181-residue protein sequence, read N- to C-terminus: MAIDLHKQGRVVKRSVVRQTKSTNVYHKLLIKLYKFLVRRTDSKFNQNILKRLSSSRLNKFPLSLSRIVKNLNETNKEQVIVSTSTVTNDERLLTVPKLTVCALKFTETARKRILAAGGKCLTFDQLALKAPTGTNCFLLRAPKSREAYRHWGKAPGQRGSHSAPYVRSEGRKFERAHGLK.

Residues 152–181 are disordered; that stretch reads WGKAPGQRGSHSAPYVRSEGRKFERAHGLK. Basic and acidic residues predominate over residues 169-181; it reads SEGRKFERAHGLK.

It belongs to the eukaryotic ribosomal protein eL18 family.

It localises to the cytoplasm. In Tetrahymena thermophila, this protein is Large ribosomal subunit protein eL18 (RPL18).